We begin with the raw amino-acid sequence, 475 residues long: Ribulose bisphosphate carboxylase large chain (475 aa).

A propeptide spanning residues 1-2 (MS) is cleaved from the precursor. Position 3 is an N-acetylproline (P3). At K14 the chain carries N6,N6,N6-trimethyllysine. Substrate-binding residues include N123 and T173. The active-site Proton acceptor is K175. Substrate is bound at residue K177. Mg(2+) is bound by residues K201, D203, and E204. K201 is modified (N6-carboxylysine). The active-site Proton acceptor is H294. Residues R295, H327, and S379 each contribute to the substrate site.

Belongs to the RuBisCO large chain family. Type I subfamily. Heterohexadecamer of 8 large chains and 8 small chains; disulfide-linked. The disulfide link is formed within the large subunit homodimers. It depends on Mg(2+) as a cofactor. The disulfide bond which can form in the large chain dimeric partners within the hexadecamer appears to be associated with oxidative stress and protein turnover.

The protein localises to the plastid. Its subcellular location is the chloroplast. The enzyme catalyses 2 (2R)-3-phosphoglycerate + 2 H(+) = D-ribulose 1,5-bisphosphate + CO2 + H2O. It carries out the reaction D-ribulose 1,5-bisphosphate + O2 = 2-phosphoglycolate + (2R)-3-phosphoglycerate + 2 H(+). RuBisCO catalyzes two reactions: the carboxylation of D-ribulose 1,5-bisphosphate, the primary event in carbon dioxide fixation, as well as the oxidative fragmentation of the pentose substrate in the photorespiration process. Both reactions occur simultaneously and in competition at the same active site. The chain is Ribulose bisphosphate carboxylase large chain from Pinus longaeva (Great Basin bristlecone pine).